Consider the following 154-residue polypeptide: Probable chemoreceptor glutamine deamidase CheD (154 aa).

The protein belongs to the CheD family.

The catalysed reaction is L-glutaminyl-[protein] + H2O = L-glutamyl-[protein] + NH4(+). Its function is as follows. Probably deamidates glutamine residues to glutamate on methyl-accepting chemotaxis receptors (MCPs), playing an important role in chemotaxis. The chain is Probable chemoreceptor glutamine deamidase CheD from Methanococcus maripaludis (strain DSM 14266 / JCM 13030 / NBRC 101832 / S2 / LL).